The chain runs to 499 residues: Laccase (499 aa).

Plastocyanin-like domains follow at residues 2-127 (VGPV…FVVY) and 139-281 (VDND…ILRY). Residues N51 and N54 are each glycosylated (N-linked (GlcNAc...) asparagine). Residues H64, H66, H109, and H111 each contribute to the Cu cation site. Intrachain disulfides connect C85–C488 and C117–C205. At Y196 the chain carries 3'-nitrotyrosine. N-linked (GlcNAc...) asparagine glycans are attached at residues N208, N217, N292, and N333. Positions 348–470 (SVPVLLQILS…GGFAVVQAED (123 aa)) constitute a Plastocyanin-like 3 domain. The residue at position 372 (Y372) is a 3'-nitrotyrosine. The N-linked (GlcNAc...) asparagine glycan is linked to N377. Cu cation-binding residues include H395, H398, and H400. 2 N-linked (GlcNAc...) asparagine glycosylation sites follow: N416 and N436. 4 residues coordinate Cu cation: H452, C453, H454, and H458.

It belongs to the multicopper oxidase family. Cu cation is required as a cofactor.

It is found in the secreted. The catalysed reaction is 4 hydroquinone + O2 = 4 benzosemiquinone + 2 H2O. Its function is as follows. Lignin degradation and detoxification of lignin-derived products. The sequence is that of Laccase from Trametes maxima (White-rot fungus).